The following is a 381-amino-acid chain: G-protein coupled receptor homolog Q2/3L (381 aa).

Residues 1 to 91 lie on the Extracellular side of the membrane; it reads MNYTLSTVSS…HCDDGVDTTS (91 aa). N-linked (GlcNAc...) asparagine; by host glycosylation is found at N2, N15, N19, N41, N50, N56, and N62. A helical transmembrane segment spans residues 92–112; that stretch reads FGLITLYSTIFFLGLFGNIIV. The Cytoplasmic segment spans residues 113-126; it reads LTVLRKYKIKTIQD. A helical transmembrane segment spans residues 127–147; the sequence is MFLLNLTLSDLIFVLVFPFNL. Over 148–165 the chain is Extracellular; that stretch reads YDSIAKQWSLGDCLCKFK. A helical membrane pass occupies residues 166–186; sequence AMFYFVGFYNSMSFITLMSID. At 187-206 the chain is on the cytoplasmic side; sequence RYLAVVHPVKSMPIRTKRYG. The chain crosses the membrane as a helical span at residues 207 to 227; that stretch reads IVLSMVVWIVSTIESFPIMLF. Residues 228–251 are Extracellular-facing; sequence YETKKVYGITYCHVFYNDNAKIWK. The chain crosses the membrane as a helical span at residues 252 to 272; it reads LFINFEINIFGMIIPLTILLY. Over 273–294 the chain is Cytoplasmic; sequence CYYKILNTLKTSQTKNKKAIKM. A helical transmembrane segment spans residues 295–315; that stretch reads VFLIVICSVLFLLPFSVTVFV. The Extracellular portion of the chain corresponds to 316–336; that stretch reads SSLYLLNVFSGCMALRFVNLA. The chain crosses the membrane as a helical span at residues 337-357; that stretch reads VHVAEIVSLCHCFINPLIYAF. The Cytoplasmic portion of the chain corresponds to 358–381; that stretch reads CSREFTKKLLRLRTTSSAGSISIG.

This sequence belongs to the G-protein coupled receptor 1 family.

The protein localises to the host cell membrane. Its function is as follows. Putative chemokine receptor. This chain is G-protein coupled receptor homolog Q2/3L, found in Ovis aries (Sheep).